The sequence spans 271 residues: Aminoglycoside 3'-phosphotransferase (271 aa).

D198 serves as the catalytic Proton acceptor.

It belongs to the aminoglycoside phosphotransferase family.

It catalyses the reaction kanamycin A + ATP = kanamycin 3'-phosphate + ADP + H(+). Its function is as follows. Resistance to kanamycin and structurally-related aminoglycosides, including amikacin. This Salmonella typhimurium protein is Aminoglycoside 3'-phosphotransferase.